A 601-amino-acid chain; its full sequence is Sulfite reductase [NADPH] flavoprotein alpha-component (601 aa).

In terms of domain architecture, Flavodoxin-like spans 65–203; it reads ITIISASQTG…NYNKWSQDLL (139 aa). Residues 71–76, 118–121, and 154–163 each bind FMN; these read SQTGNA, STQG, and LGDTSYNLFC. Residues 236–450 form the FAD-binding FR-type domain; the sequence is KNPAEGIILT…IQTNDNFRLP (215 aa). FAD contacts are provided by residues Thr-324, Ile-358, 388-391, 406-408, and 421-424; these read RLYS, TVG, and GGAS. NADP(+) contacts are provided by residues 521 to 522, 527 to 531, and Asp-563; these read SQ and KIYVQ. Tyr-601 is a binding site for FAD.

The protein belongs to the NADPH-dependent sulphite reductase flavoprotein subunit CysJ family. It in the N-terminal section; belongs to the flavodoxin family. This sequence in the C-terminal section; belongs to the flavoprotein pyridine nucleotide cytochrome reductase family. Alpha(8)-beta(8). The alpha component is a flavoprotein, the beta component is a hemoprotein. The cofactor is FAD. FMN serves as cofactor.

It carries out the reaction hydrogen sulfide + 3 NADP(+) + 3 H2O = sulfite + 3 NADPH + 4 H(+). Its pathway is sulfur metabolism; hydrogen sulfide biosynthesis; hydrogen sulfide from sulfite (NADPH route): step 1/1. Component of the sulfite reductase complex that catalyzes the 6-electron reduction of sulfite to sulfide. This is one of several activities required for the biosynthesis of L-cysteine from sulfate. The flavoprotein component catalyzes the electron flow from NADPH -&gt; FAD -&gt; FMN to the hemoprotein component. The protein is Sulfite reductase [NADPH] flavoprotein alpha-component of Buchnera aphidicola subsp. Acyrthosiphon pisum (strain APS) (Acyrthosiphon pisum symbiotic bacterium).